Here is a 193-residue protein sequence, read N- to C-terminus: Ion-translocating oxidoreductase complex subunit A (193 aa).

The next 6 membrane-spanning stretches (helical) occupy residues 5-25, 38-58, 65-85, 102-122, 134-154, and 171-191; these read LLIL…FLGL, AMGM…CSYL, APLG…AVVV, VLGI…VALL, ILYG…FSAM, and AIGM…TGLV.

It belongs to the NqrDE/RnfAE family. As to quaternary structure, the complex is composed of six subunits: RnfA, RnfB, RnfC, RnfD, RnfE and RnfG.

The protein localises to the cell inner membrane. Its function is as follows. Part of a membrane-bound complex that couples electron transfer with translocation of ions across the membrane. This is Ion-translocating oxidoreductase complex subunit A from Hahella chejuensis (strain KCTC 2396).